We begin with the raw amino-acid sequence, 106 residues long: uncharacterized protein (106 aa).

The HTH hxlR-type domain occupies 1 to 93 (MSIFYVLGKK…WEAKWKEAKI (93 aa)).

This is an uncharacterized protein from Methanocaldococcus jannaschii (strain ATCC 43067 / DSM 2661 / JAL-1 / JCM 10045 / NBRC 100440) (Methanococcus jannaschii).